The primary structure comprises 211 residues: Outer-membrane lipoprotein carrier protein (211 aa).

An N-terminal signal peptide occupies residues methionine 1–alanine 25.

Belongs to the LolA family. As to quaternary structure, monomer.

The protein localises to the periplasm. Functionally, participates in the translocation of lipoproteins from the inner membrane to the outer membrane. Only forms a complex with a lipoprotein if the residue after the N-terminal Cys is not an aspartate (The Asp acts as a targeting signal to indicate that the lipoprotein should stay in the inner membrane). In Pseudomonas putida (strain W619), this protein is Outer-membrane lipoprotein carrier protein.